A 196-amino-acid chain; its full sequence is MPIGVPKVPFRNPGEEDAVWVDVYNRLYRERLLFLGQEVDSEISNQLIGLMVYLSIENDTKDLYLFINSPGGWVIPGVAIYDTMQFVQPDVHTICMGLAASMGSFLLAGGEITKRLAFPHARVMIHQPASSFYEAQTGEFILEAEELLKLRESLTRVYVQRTGKPLWVVSEDMERDVFMSATEAQAHGIVDLVAVK.

The Nucleophile role is filled by S101. H126 is an active-site residue.

This sequence belongs to the peptidase S14 family. Component of the chloroplastic Clp protease core complex.

The protein resides in the plastid. It localises to the chloroplast stroma. It catalyses the reaction Hydrolysis of proteins to small peptides in the presence of ATP and magnesium. alpha-casein is the usual test substrate. In the absence of ATP, only oligopeptides shorter than five residues are hydrolyzed (such as succinyl-Leu-Tyr-|-NHMec, and Leu-Tyr-Leu-|-Tyr-Trp, in which cleavage of the -Tyr-|-Leu- and -Tyr-|-Trp bonds also occurs).. In terms of biological role, cleaves peptides in various proteins in a process that requires ATP hydrolysis. Has a chymotrypsin-like activity. Plays a major role in the degradation of misfolded proteins. The sequence is that of ATP-dependent Clp protease proteolytic subunit from Gossypium hirsutum (Upland cotton).